Consider the following 1921-residue polypeptide: Histone transcription regulator 3 homolog (1921 aa).

Disordered stretches follow at residues 350-439, 1402-1466, 1738-1769, and 1799-1921; these read IGEV…LEKQ, GEDA…ATPV, PGSA…KTRV, and KGPP…SAPE. 2 stretches are compositionally biased toward basic and acidic residues: residues 353 to 376 and 391 to 400; these read VENK…KKEA and TTVKTEDRDS. The span at 413–422 shows a compositional bias: polar residues; the sequence is GTTSSSQPPS. The segment covering 428–439 has biased composition (basic and acidic residues); it reads RGADEPAELEKQ. Positions 1402-1425 are enriched in acidic residues; sequence GEDADMESGDDSDSDSEVGSDSET. The segment covering 1757–1769 has biased composition (basic and acidic residues); the sequence is GKKEDGKKEKTRV. The segment covering 1806 to 1818 has biased composition (low complexity); that stretch reads SSNGSSSNSGTRS. Composition is skewed to basic and acidic residues over residues 1819 to 1836 and 1861 to 1890; these read NSEE…KSTQ and EADK…EKSA. A compositionally biased stretch (polar residues) spans 1899–1910; it reads TPKSKSTGSNGV.

The protein belongs to the HIR3 family.

Its subcellular location is the nucleus. In terms of biological role, has a role in a nucleosome assembly pathway that is required for the integrity of heterochromatin and proper chromosome segregation. This is Histone transcription regulator 3 homolog (HIR3) from Yarrowia lipolytica (strain CLIB 122 / E 150) (Yeast).